We begin with the raw amino-acid sequence, 423 residues long: Histidine--tRNA ligase 2 (423 aa).

This sequence belongs to the class-II aminoacyl-tRNA synthetase family. Homodimer.

The protein localises to the cytoplasm. It carries out the reaction tRNA(His) + L-histidine + ATP = L-histidyl-tRNA(His) + AMP + diphosphate + H(+). This is Histidine--tRNA ligase 2 from Bacillus cereus (strain ATCC 14579 / DSM 31 / CCUG 7414 / JCM 2152 / NBRC 15305 / NCIMB 9373 / NCTC 2599 / NRRL B-3711).